Reading from the N-terminus, the 132-residue chain is Small ribosomal subunit protein uS8 (132 aa).

It belongs to the universal ribosomal protein uS8 family. Part of the 30S ribosomal subunit. Contacts proteins S5 and S12.

Its function is as follows. One of the primary rRNA binding proteins, it binds directly to 16S rRNA central domain where it helps coordinate assembly of the platform of the 30S subunit. This chain is Small ribosomal subunit protein uS8, found in Renibacterium salmoninarum (strain ATCC 33209 / DSM 20767 / JCM 11484 / NBRC 15589 / NCIMB 2235).